The chain runs to 633 residues: Threonine--tRNA ligase (633 aa).

The segment at 1-143 (MRALFLHSNR…SRTIKPKKVK (143 aa)) is editing domain. Catalytic stretches follow at residues 220–515 (NPLN…PVLP) and 221–515 (PLND…PVLP). Residues C314, H365, and H488 each coordinate Zn(2+).

It belongs to the class-II aminoacyl-tRNA synthetase family. Homodimer. It depends on Zn(2+) as a cofactor.

The protein resides in the cytoplasm. It catalyses the reaction tRNA(Thr) + L-threonine + ATP = L-threonyl-tRNA(Thr) + AMP + diphosphate + H(+). Functionally, catalyzes the attachment of threonine to tRNA(Thr) in a two-step reaction: L-threonine is first activated by ATP to form Thr-AMP and then transferred to the acceptor end of tRNA(Thr). Also edits incorrectly charged L-seryl-tRNA(Thr). The chain is Threonine--tRNA ligase from Nanoarchaeum equitans (strain Kin4-M).